Here is a 431-residue protein sequence, read N- to C-terminus: Na(+)/H(+) antiporter NhaA (431 aa).

The next 11 helical transmembrane spans lie at 33–53 (VGGA…NSPW), 74–94 (LSIS…VVGV), 112–132 (ALPI…FVGV), 144–164 (GWAI…AVIA), 173–193 (IFLL…IAVF), 197–217 (QLSF…GLAV), 225–245 (FLLL…GVHA), 279–299 (FAVP…LSGF), 311–331 (VIAG…YVLA), 347–367 (VLGL…IGEL), and 379–399 (AKIA…VVLL).

This sequence belongs to the NhaA Na(+)/H(+) (TC 2.A.33) antiporter family.

It is found in the cell membrane. The enzyme catalyses Na(+)(in) + 2 H(+)(out) = Na(+)(out) + 2 H(+)(in). Its function is as follows. Na(+)/H(+) antiporter that extrudes sodium in exchange for external protons. The polypeptide is Na(+)/H(+) antiporter NhaA (Mycolicibacterium smegmatis (strain ATCC 700084 / mc(2)155) (Mycobacterium smegmatis)).